A 723-amino-acid chain; its full sequence is Catalase-peroxidase (723 aa).

Positions 97 to 225 form a cross-link, tryptophyl-tyrosyl-methioninium (Trp-Tyr) (with M-251); that stretch reads WHAAGSYRVT…LAAVQMGLIY (129 aa). The active-site Proton acceptor is the His-98. Residues 225-251 constitute a cross-link (tryptophyl-tyrosyl-methioninium (Tyr-Met) (with W-97)); it reads YVNPEGVNGKSDPLATAAQMRETFARM. His-266 provides a ligand contact to heme b.

This sequence belongs to the peroxidase family. Peroxidase/catalase subfamily. In terms of assembly, homodimer or homotetramer. It depends on heme b as a cofactor. In terms of processing, formation of the three residue Trp-Tyr-Met cross-link is important for the catalase, but not the peroxidase activity of the enzyme.

It carries out the reaction H2O2 + AH2 = A + 2 H2O. It catalyses the reaction 2 H2O2 = O2 + 2 H2O. Its function is as follows. Bifunctional enzyme with both catalase and broad-spectrum peroxidase activity. Involved in tumorigenesis. This Rhizobium radiobacter (Agrobacterium tumefaciens) protein is Catalase-peroxidase.